The following is an 879-amino-acid chain: Protein translocase subunit SecA (879 aa).

Residues Q86, 104–108, and D500 each bind ATP; that span reads GEGKT. Positions 863, 865, 874, and 875 each coordinate Zn(2+).

This sequence belongs to the SecA family. As to quaternary structure, monomer and homodimer. Part of the essential Sec protein translocation apparatus which comprises SecA, SecYEG and auxiliary proteins SecDF-YajC and YidC. Zn(2+) is required as a cofactor.

The protein resides in the cell inner membrane. Its subcellular location is the cytoplasm. It carries out the reaction ATP + H2O + cellular proteinSide 1 = ADP + phosphate + cellular proteinSide 2.. Functionally, part of the Sec protein translocase complex. Interacts with the SecYEG preprotein conducting channel. Has a central role in coupling the hydrolysis of ATP to the transfer of proteins into and across the cell membrane, serving both as a receptor for the preprotein-SecB complex and as an ATP-driven molecular motor driving the stepwise translocation of polypeptide chains across the membrane. The chain is Protein translocase subunit SecA from Orientia tsutsugamushi (strain Ikeda) (Rickettsia tsutsugamushi).